A 344-amino-acid chain; its full sequence is Protein AIR2 (344 aa).

Residues 1-23 (MEKNTAPFVVDTAPTTPPDKLVA) form a disordered region. Ser-31 and Ser-49 each carry phosphoserine. CCHC-type zinc fingers lie at residues 61 to 78 (PKCNNCSQRGHLKKDCPH), 99 to 116 (IQCSKCDEVGHYRSQCPH), and 162 to 179 (IYCYNCGGKGHFGDDCKE). Disordered stretches follow at residues 227–274 (YDED…PTIR) and 312–344 (STYVDNNSISNSSNYRNYNSYQPYRSGTLGKRR). A compositionally biased stretch (low complexity) spans 317 to 337 (NNSISNSSNYRNYNSYQPYRS).

Belongs to the AIR1 family. In terms of assembly, component of the TRAMP complex (also called TRF4 complex) composed of at least HUL4, MTR4, PAP2/TRF4 and either AIR1 or AIR2. Interacts with HMT1 and NPL3. The interaction with NPL3 requires the presence of HMT1. Interacts directly with PAP2.

It is found in the nucleus. Component of the TRAMP (TRF4) complex which has a poly(A) RNA polymerase activity and is involved in a post-transcriptional quality control mechanism limiting inappropriate expression of genetic information. Polyadenylation is required for the degradative activity of the exosome on several of its nuclear RNA substrates like cryptic transcripts generated by RNA polymerase II and III, or hypomethylated pre-tRNAi-Met. Both complexes polyadenylate RNA processing and degradation intermediates of snRNAs, snoRNAs and mRNAs that accumulate in strains lacking a functional exosome. AIR2 also inhibits the methylation of NPL3 mediated by HMT1 through its interaction with HMT1. This chain is Protein AIR2 (AIR2), found in Saccharomyces cerevisiae (strain ATCC 204508 / S288c) (Baker's yeast).